The chain runs to 519 residues: MEWKLQRTARRKIRTEEEMLWENIMRVLANGMKQQRNQGSPKELDSVAVTYSSFKSNFVKRLSAEIPVASSPITTRWQLSPARDPESSSSVEEGPPSHTPESLASGLKITPAADTLTLRSHNKNSPKTLSKGSSEVNNSTLRFCKTPLAGDRGWKENLATKGQRCLNQPFSTQKGAQQIDGKMHLCEESRCVRTGCRFGARDEFYLRRFSGVYHSTCQPEVKIHLTGLRNDYYLNTLDWSSQNLVAVALGTSVYIWNGQNHSWIENIDLSVCCHYVSSVTWMREGSCLAVGTSEGEVQLWDAITKKQLRNLHGHLSVVGALSWNHCTLSSGSRLGRVHHHDVRVAQHRVGTLYHKEAVCSLKWSPDGRLLSSGCNDGLLTIWPHDPGAGVQGLPLKVIPQSTAVKAMEWCPWQSEVLAVGGGVKDGCLHVLDINTGKNIQTPSTQSQICSLIWLPKTKEIATGQGAPKNDVALWTCPTLFRSGGFFGHRDRVLHLSLSPDQTRLFSAAADGTACVWKCC.

Positions 77-106 (WQLSPARDPESSSSVEEGPPSHTPESLASG) are disordered. Residues 87–96 (SSSSVEEGPP) are compositionally biased toward low complexity. WD repeat units follow at residues 229–266 (RNDY…WIEN), 271–310 (VCCH…QLRN), 353–392 (YHKE…GVQG), 399–441 (PQST…NIQT), 443–484 (STQS…RSGG), and 487–519 (GHRD…WKCC).

It belongs to the WD repeat CDC20/Fizzy family. In terms of tissue distribution, expressed in multiciliated cells (MCCs).

The protein resides in the cytoplasm. In terms of biological role, protein regulator of centriole-deuterosome disengagement and subsequently participates in the ciliogenesis in multiciliated cells (MCCs). The protein is Cell division cycle protein 20 homolog B of Mus musculus (Mouse).